The chain runs to 211 residues: tRNA (guanine-N(7)-)-methyltransferase (211 aa).

Glu37, Asp62, Glu89, and Asp112 together coordinate S-adenosyl-L-methionine. Asp112 is a catalytic residue. The substrate site is built by Lys116 and Asp148.

This sequence belongs to the class I-like SAM-binding methyltransferase superfamily. TrmB family.

It catalyses the reaction guanosine(46) in tRNA + S-adenosyl-L-methionine = N(7)-methylguanosine(46) in tRNA + S-adenosyl-L-homocysteine. It participates in tRNA modification; N(7)-methylguanine-tRNA biosynthesis. Functionally, catalyzes the formation of N(7)-methylguanine at position 46 (m7G46) in tRNA. This chain is tRNA (guanine-N(7)-)-methyltransferase, found in Geobacter metallireducens (strain ATCC 53774 / DSM 7210 / GS-15).